The sequence spans 305 residues: Oxygen-dependent coproporphyrinogen-III oxidase (305 aa).

Residue serine 92 coordinates substrate. A divalent metal cation contacts are provided by histidine 96 and histidine 106. Catalysis depends on histidine 106, which acts as the Proton donor. 108–110 (NVR) is a substrate binding site. Residues histidine 145 and histidine 175 each contribute to the a divalent metal cation site. The important for dimerization stretch occupies residues 239–274 (YVEFNLLFDRGTLFGLQSGGRAESILISLPPLVRWE). 257 to 259 (GGR) serves as a coordination point for substrate.

The protein belongs to the aerobic coproporphyrinogen-III oxidase family. Homodimer. It depends on a divalent metal cation as a cofactor.

It is found in the cytoplasm. The catalysed reaction is coproporphyrinogen III + O2 + 2 H(+) = protoporphyrinogen IX + 2 CO2 + 2 H2O. It functions in the pathway porphyrin-containing compound metabolism; protoporphyrin-IX biosynthesis; protoporphyrinogen-IX from coproporphyrinogen-III (O2 route): step 1/1. In terms of biological role, involved in the heme biosynthesis. Catalyzes the aerobic oxidative decarboxylation of propionate groups of rings A and B of coproporphyrinogen-III to yield the vinyl groups in protoporphyrinogen-IX. The polypeptide is Oxygen-dependent coproporphyrinogen-III oxidase (Xylella fastidiosa (strain Temecula1 / ATCC 700964)).